A 56-amino-acid chain; its full sequence is Ovomucoid (56 aa).

Residues 6–56 (VDCSEYPKPACTLEYRPLCGSDNKTYANKCNFCNAVVESNGTLTLSHFGKC) enclose the Kazal-like domain. Disulfide bonds link Cys8-Cys38, Cys16-Cys35, and Cys24-Cys56. N-linked (GlcNAc...) asparagine glycosylation occurs at Asn45.

It localises to the secreted. The polypeptide is Ovomucoid (Callipepla californica (California quail)).